A 418-amino-acid polypeptide reads, in one-letter code: Thyroxine-binding globulin (418 aa).

The N-terminal stretch at 1–20 (MSVFFYLFVLVFGLQATIHC) is a signal peptide. 6 N-linked (GlcNAc...) asparagine glycosylation sites follow: N24, N39, N102, N168, N227, and N256. The thyroxine site is built by N296 and K401.

This sequence belongs to the serpin family.

The protein localises to the secreted. Functionally, major thyroid hormone transport protein in serum. The chain is Thyroxine-binding globulin (Serpina7) from Mus musculus (Mouse).